Reading from the N-terminus, the 726-residue chain is Catalase-peroxidase (726 aa).

The tryptophyl-tyrosyl-methioninium (Trp-Tyr) (with M-239) cross-link spans 90 to 213 (WHAAGTYRIG…LAAVQMGLIY (124 aa)). H91 acts as the Proton acceptor in catalysis. A cross-link (tryptophyl-tyrosyl-methioninium (Tyr-Met) (with W-90)) is located at residues 213 to 239 (YVNPEGPNGNPDPLAAARDIRETFARM). H254 contacts heme b. The segment at 334–359 (AHQWKPKHGAGANTVPDAHDPSKRHA) is disordered.

The protein belongs to the peroxidase family. Peroxidase/catalase subfamily. In terms of assembly, homodimer or homotetramer. It depends on heme b as a cofactor. Formation of the three residue Trp-Tyr-Met cross-link is important for the catalase, but not the peroxidase activity of the enzyme.

It catalyses the reaction H2O2 + AH2 = A + 2 H2O. The enzyme catalyses 2 H2O2 = O2 + 2 H2O. Bifunctional enzyme with both catalase and broad-spectrum peroxidase activity. The protein is Catalase-peroxidase of Bradyrhizobium sp. (strain BTAi1 / ATCC BAA-1182).